Here is a 256-residue protein sequence, read N- to C-terminus: Pimeloyl-[acyl-carrier protein] methyl ester esterase (256 aa).

One can recognise an AB hydrolase-1 domain in the interval 15 to 242; it reads HLVLLHGWGL…AAHAPFISHP (228 aa). Residues tryptophan 22, 82-83, and 143-147 contribute to the substrate site; these read SL and FLALQ. Serine 82 functions as the Nucleophile in the catalytic mechanism. Catalysis depends on residues aspartate 207 and histidine 235. Residue histidine 235 participates in substrate binding.

The protein belongs to the AB hydrolase superfamily. Carboxylesterase BioH family. In terms of assembly, monomer.

Its subcellular location is the cytoplasm. It catalyses the reaction 6-carboxyhexanoyl-[ACP] methyl ester + H2O = 6-carboxyhexanoyl-[ACP] + methanol + H(+). It functions in the pathway cofactor biosynthesis; biotin biosynthesis. Functionally, the physiological role of BioH is to remove the methyl group introduced by BioC when the pimeloyl moiety is complete. It allows to synthesize pimeloyl-ACP via the fatty acid synthetic pathway through the hydrolysis of the ester bonds of pimeloyl-ACP esters. This chain is Pimeloyl-[acyl-carrier protein] methyl ester esterase, found in Escherichia coli O45:K1 (strain S88 / ExPEC).